The chain runs to 464 residues: Mothers against decapentaplegic homolog 5 (464 aa).

The MH1 domain occupies 13–137 (PAVKRLLGWK…YKRVESPVLP (125 aa)). 4 residues coordinate Zn(2+): C65, C110, C122, and H127. The tract at residues 166 to 258 (HMPLNATFPE…LAPQNMPRGD (93 aa)) is disordered. Residues 173-183 (FPESFQQHSGG) show a composition bias toward polar residues. Low complexity predominate over residues 199–216 (ASSGTYPNSPASSGPSSP). Positions 237–251 (QDGSQSMETGSSLAP) are enriched in polar residues. The MH2 domain maps to 270-464 (WCSIVYYELN…SPLNPISSVS (195 aa)).

Belongs to the dwarfin/SMAD family. In terms of assembly, may form trimers with the co-SMAD SMAD4.

It is found in the cytoplasm. It localises to the nucleus. Functionally, involved in ventralization. May mediate Bmp2b signaling during early phases of embryonic dorsal-ventral pattern formation. Required for initiation of Smad1 expression during gastrulation. In Danio rerio (Zebrafish), this protein is Mothers against decapentaplegic homolog 5 (smad5).